We begin with the raw amino-acid sequence, 431 residues long: ABSCISIC ACID-INSENSITIVE 5-like protein 7 (431 aa).

The segment at 1-29 is disordered; sequence MGTHINFNNLGGGGHPGGEGSSNQMKPTG. A compositionally biased stretch (gly residues) spans 10–20; it reads LGGGGHPGGEG. Residues Ser-39 and Ser-61 each carry the phosphoserine modification. Ser-110 is subject to Phosphoserine; by CPK32. Positions 133–153 are disordered; sequence DGNMEGSSGGGGESNVPPGRQ. Thr-155 bears the Phosphothreonine mark. A compositionally biased stretch (polar residues) spans 319–331; it reads SPGTSSAENNSLS. A disordered region spans residues 319–338; sequence SPGTSSAENNSLSPVPYVLN. A Nuclear localization signal motif is present at residues 340 to 347; sequence GRRSNTGL. The bZIP domain maps to 351–414; sequence IERRQRRMIK…KNELKETSKR (64 aa). Residues 353–372 are basic motif; the sequence is RRQRRMIKNRESAARSRARK. Residues 372–411 are a coiled coil; the sequence is KQAYTLELEAEIEKLKKTNQELQKKQAEMVEMQKNELKET. Positions 379-393 are leucine-zipper; it reads LEAEIEKLKKTNQEL.

It belongs to the bZIP family. ABI5 subfamily. DNA-binding heterodimer. Interacts with CPK32 and the AFP proteins AFP1, AFP2 and AFP3. Interacts with FREE1 (via C-terminus). Post-translationally, phosphorylated by CPK4 and CPK11 in vitro. In terms of tissue distribution, expressed in roots, leaves, flowers and immatures siliques.

It localises to the nucleus. Its function is as follows. Functions as a transcriptional activator in the ABA-inducible expression of LTI65/RD29B (AC Q04980). Binds specifically to the ABA-responsive element (ABRE) of the LTI65/RD29B (AC Q04980) gene promoter. Binds to the promoter of FREE1 and activates its transcription. The polypeptide is ABSCISIC ACID-INSENSITIVE 5-like protein 7 (Arabidopsis thaliana (Mouse-ear cress)).